The sequence spans 373 residues: Dual-specificity RNA methyltransferase RlmN (373 aa).

Residue glutamate 94 is the Proton acceptor of the active site. The 240-residue stretch at 100–339 folds into the Radical SAM core domain; that stretch reads EDDRATLCVS…VIVRKTRGDD (240 aa). Cysteine 107 and cysteine 344 form a disulfide bridge. [4Fe-4S] cluster is bound by residues cysteine 114, cysteine 118, and cysteine 121. S-adenosyl-L-methionine contacts are provided by residues 168 to 169, serine 200, 222 to 224, and asparagine 301; these read GE and SIH. Residue cysteine 344 is the S-methylcysteine intermediate of the active site.

This sequence belongs to the radical SAM superfamily. RlmN family. Requires [4Fe-4S] cluster as cofactor.

The protein resides in the cytoplasm. The catalysed reaction is adenosine(2503) in 23S rRNA + 2 reduced [2Fe-2S]-[ferredoxin] + 2 S-adenosyl-L-methionine = 2-methyladenosine(2503) in 23S rRNA + 5'-deoxyadenosine + L-methionine + 2 oxidized [2Fe-2S]-[ferredoxin] + S-adenosyl-L-homocysteine. It catalyses the reaction adenosine(37) in tRNA + 2 reduced [2Fe-2S]-[ferredoxin] + 2 S-adenosyl-L-methionine = 2-methyladenosine(37) in tRNA + 5'-deoxyadenosine + L-methionine + 2 oxidized [2Fe-2S]-[ferredoxin] + S-adenosyl-L-homocysteine. Specifically methylates position 2 of adenine 2503 in 23S rRNA and position 2 of adenine 37 in tRNAs. m2A2503 modification seems to play a crucial role in the proofreading step occurring at the peptidyl transferase center and thus would serve to optimize ribosomal fidelity. The chain is Dual-specificity RNA methyltransferase RlmN from Shewanella sp. (strain MR-4).